A 182-amino-acid chain; its full sequence is Neuropeptide CCHamide-1 (182 aa).

The first 22 residues, 1–22, serve as a signal peptide directing secretion; the sequence is MWYSKCSWTLVVLVALFALVTG. A disulfide bridge connects residues cysteine 24 and cysteine 31. Histidine 35 carries the post-translational modification Histidine amide. The propeptide occupies 39–182; the sequence is SGGKAVIDAK…ENYSGYELTK (144 aa). Disordered regions lie at residues 67-103 and 133-154; these read NNNN…AAPA and QLQD…DAAA. A compositionally biased stretch (low complexity) spans 87–103; it reads RNTNANSANNIPLAAPA. Residue asparagine 174 is glycosylated (N-linked (GlcNAc...) asparagine).

Expressed in endocrine cells of the larval midgut (at protein level). In the brain, expressed in the optic lobes, lateral protocerebrum, subesophageal ganglion, and intermediate and superior medial protocerebrum (at protein level). Expressed in DN1a neurons but not in other clock neurons and expression follows a rhythmic pattern controlled by the circadian clock (at protein level). In the posterior midgut, expressed in enteroendocrine cells (at protein level). Low levels in larval brain with higher levels in larval and adult gut and adult brain.

The protein localises to the secreted. Its function is as follows. Neuropeptide ligand for the CCHamide-1 receptor CCHa1-R. Neuromessenger mediating signaling between neuronal cells of the circadian clock network involved in regulation of sleep latency (the time required to fall asleep), amount of sleep and depth of sleep (arousability). Together with PDF, involved in regulating intensity and periodicity of daytime activity. In subsets of clock neurons modulates the rhythmic expression of PDP1 and PDF, and together with PDF modulates the rhythmic expression of circadian protein PER/period, but not TIM/timeless. Mediates signaling from DN1a (anterior dorsal neurons 1) clock neurons to s-LNv (small ventral lateral neurons) clock neurons through CCHa1-R, contributing to regulation of activity rhythms by the circadian clock, particularly in the morning. May be involved in signaling between clock neurons and non-clock neurons, such as the fan-shaped body, involved in sleep homeostasis. In response to a high protein diet mediates hormonal signaling between the gut and a CCHa1-R expressing subset of dopaminergic cells in the protocerebral anterior medial (PAM) cluster of the brain. This suppresses arousability by mechano-sensory stimulation (but not thermal stimulation) but is not involved in regulation of sleep patterns. The sequence is that of Neuropeptide CCHamide-1 from Drosophila melanogaster (Fruit fly).